Reading from the N-terminus, the 183-residue chain is Cuticle protein 2 (183 aa).

The first 15 residues, 1–15 (MKLIVVAALIGVCAG), serve as a signal peptide directing secretion. A Chitin-binding type R&amp;R domain is found at 58–121 (SQGFQYVYDT…AQGAHLPTPP (64 aa)).

In Lonomia obliqua (Moth), this protein is Cuticle protein 2.